Reading from the N-terminus, the 85-residue chain is Large ribosomal subunit protein bL27 (85 aa).

The tract at residues 1–22 (MAHKKAGGSTRNGRDSESKRLG) is disordered.

Belongs to the bacterial ribosomal protein bL27 family.

The protein is Large ribosomal subunit protein bL27 of Aliivibrio salmonicida (strain LFI1238) (Vibrio salmonicida (strain LFI1238)).